The chain runs to 334 residues: Putative B3 domain-containing protein At5g66980 (334 aa).

DNA-binding regions (TF-B3) lie at residues 8–105 (LQFF…FAND) and 218–317 (HPHF…VSGR).

The protein localises to the nucleus. This chain is Putative B3 domain-containing protein At5g66980, found in Arabidopsis thaliana (Mouse-ear cress).